We begin with the raw amino-acid sequence, 198 residues long: 7-methyl-GTP pyrophosphatase (198 aa).

Asp-75 serves as the catalytic Proton acceptor.

This sequence belongs to the Maf family. YceF subfamily. A divalent metal cation is required as a cofactor.

The protein resides in the cytoplasm. The enzyme catalyses N(7)-methyl-GTP + H2O = N(7)-methyl-GMP + diphosphate + H(+). Functionally, nucleoside triphosphate pyrophosphatase that hydrolyzes 7-methyl-GTP (m(7)GTP). May have a dual role in cell division arrest and in preventing the incorporation of modified nucleotides into cellular nucleic acids. The protein is 7-methyl-GTP pyrophosphatase of Bartonella henselae (strain ATCC 49882 / DSM 28221 / CCUG 30454 / Houston 1) (Rochalimaea henselae).